A 350-amino-acid chain; its full sequence is MAARLCTRCLPPVWLCRQAWQGQGRHYRAALCTELKQPLTIQEVAPRPVGPQEVRVDVHFCGVNFADILACRGQYQEKPPLPFTPGMEFSGAVLETGTDVSTVKKGDRVIGVSSFHAMAEQCITDQKTLWRIPENVSLQDAAVLPVSYGTAILAVDHRARIQPGETVLVTAAAGATGLAVIDVATNVFRAKVIAATGSDEKCKLAVQRGAQFSVNYSQGSLRDAVKKLAGSGGVNVAIDMVGGDVFLESLRSLAWEGRIVVLGFAGGNIASVPSNLLLLKNISAMGLYWGRYQHQDFAVFSKSMSTAMQYCQQGLIHPHTGAVFKLEKINDAFLHVMQRKSTGKVLLSLK.

The residue at position 36 (K36) is an N6-acetyllysine. An N6-succinyllysine modification is found at K201. An N6-acetyllysine mark is found at K302 and K328.

The protein belongs to the zinc-containing alcohol dehydrogenase family. Quinone oxidoreductase subfamily.

The polypeptide is Quinone oxidoreductase-like protein 2 (Mus musculus (Mouse)).